A 220-amino-acid polypeptide reads, in one-letter code: 7-cyano-7-deazaguanine synthase (220 aa).

An ATP-binding site is contributed by 11–21 (VSGGMDSVTLM). C186, C194, C197, and C200 together coordinate Zn(2+).

This sequence belongs to the QueC family. Zn(2+) is required as a cofactor.

It carries out the reaction 7-carboxy-7-deazaguanine + NH4(+) + ATP = 7-cyano-7-deazaguanine + ADP + phosphate + H2O + H(+). It participates in purine metabolism; 7-cyano-7-deazaguanine biosynthesis. Functionally, catalyzes the ATP-dependent conversion of 7-carboxy-7-deazaguanine (CDG) to 7-cyano-7-deazaguanine (preQ(0)). The chain is 7-cyano-7-deazaguanine synthase from Porphyromonas gingivalis (strain ATCC 33277 / DSM 20709 / CIP 103683 / JCM 12257 / NCTC 11834 / 2561).